Here is a 210-residue protein sequence, read N- to C-terminus: Probable GTP-binding protein EngB (210 aa).

In terms of domain architecture, EngB-type G spans 24 to 199 (QGCEVAFAGR…WEVLGRWLDL (176 aa)). Residues 32 to 39 (GRSNAGKS), 59 to 63 (GRTRM), 77 to 80 (DLPG), 144 to 147 (TKSD), and 178 to 180 (FSS) each bind GTP. The Mg(2+) site is built by Ser-39 and Thr-61.

It belongs to the TRAFAC class TrmE-Era-EngA-EngB-Septin-like GTPase superfamily. EngB GTPase family. The cofactor is Mg(2+).

Necessary for normal cell division and for the maintenance of normal septation. The polypeptide is Probable GTP-binding protein EngB (Methylococcus capsulatus (strain ATCC 33009 / NCIMB 11132 / Bath)).